Reading from the N-terminus, the 146-residue chain is Catabolic 3-dehydroquinase (146 aa).

Residue Tyr24 is the Proton acceptor of the active site. Residues Asn78, His84, and Asp91 each contribute to the substrate site. His104 serves as the catalytic Proton donor. Substrate is bound by residues Ile105–Thr106 and Arg115.

Belongs to the type-II 3-dehydroquinase family. Homododecamer. Adopts a ring-like structure, composed of an arrangement of two hexameric rings stacked on top of one another.

It carries out the reaction 3-dehydroquinate = 3-dehydroshikimate + H2O. It participates in aromatic compound metabolism; 3,4-dihydroxybenzoate biosynthesis; 3,4-dihydroxybenzoate from 3-dehydroquinate: step 1/2. Functionally, is involved in the catabolism of quinate. Allows the utilization of quinate as carbon source via the beta-ketoadipate pathway. The polypeptide is Catabolic 3-dehydroquinase (Candida dubliniensis (strain CD36 / ATCC MYA-646 / CBS 7987 / NCPF 3949 / NRRL Y-17841) (Yeast)).